The chain runs to 65 residues: Small ribosomal subunit protein bS21 (65 aa).

Belongs to the bacterial ribosomal protein bS21 family.

The chain is Small ribosomal subunit protein bS21 from Chlorobium chlorochromatii (strain CaD3).